We begin with the raw amino-acid sequence, 202 residues long: MSRYTGSIYKKSRRLGFSLLENNKEFNSGKKRTYGPGQHGNKKVKLSNYGQQLVEKQKLMFLYGLNDRQFRRLYRVALGRPGVLTLNLLQVLESRLDSLVYRAGFAPTRRAARQLVNHSHVLVNGKKVNIPSALVEVGSTIALKEKSLEMPLIKNTLNKPADFIELVDKDKKVAKLSRLPERSELPADVNEAYVVEWYNRLM.

The region spanning 94-157 (SRLDSLVYRA…LEMPLIKNTL (64 aa)) is the S4 RNA-binding domain.

This sequence belongs to the universal ribosomal protein uS4 family. Part of the 30S ribosomal subunit. Contacts protein S5. The interaction surface between S4 and S5 is involved in control of translational fidelity.

Its function is as follows. One of the primary rRNA binding proteins, it binds directly to 16S rRNA where it nucleates assembly of the body of the 30S subunit. Functionally, with S5 and S12 plays an important role in translational accuracy. The protein is Small ribosomal subunit protein uS4 of Ureaplasma urealyticum serovar 10 (strain ATCC 33699 / Western).